Consider the following 1237-residue polypeptide: Cilia- and flagella-associated protein 61 (1237 aa).

Residues 278-301 (QDLSVRRSQDAELRSSSQGSQKIV) form a disordered region. Positions 281–290 (SVRRSQDAEL) are enriched in basic and acidic residues.

Component of axonemal radial spokes, the protein complexes that link the outer microtubule doublets with the central pair of microtubules. Interacts with CFAP91/MAATS1, ODAD2/ARMC4, RSPH3A, ROPN1, ROPN1L and RSPH9. Interacts with DYNLT1, DYNC1I2 and TUBB3. Interacts with WDR35, IFT22 and IFT81.

The protein resides in the cytoplasm. It localises to the cytoskeleton. The protein localises to the flagellum axoneme. Involved in sperm flagellum assembly. Plays an essential role in the formation of the radial spokes in flagellum axoneme. The chain is Cilia- and flagella-associated protein 61 from Homo sapiens (Human).